A 210-amino-acid chain; its full sequence is Acyl-homoserine-lactone synthase (210 aa).

Belongs to the autoinducer synthase family.

The catalysed reaction is a fatty acyl-[ACP] + S-adenosyl-L-methionine = an N-acyl-L-homoserine lactone + S-methyl-5'-thioadenosine + holo-[ACP] + H(+). Functionally, required for the synthesis of OHHL (N-(3-oxohexanoyl)-L-homoserine lactone), an autoinducer molecule which binds to EsaR. OHHL is necessary for biosynthesis of EPS virulence factor (extracellular heteropolysaccharide) which plays a role in the development of Stewart's wilt on sweet corn. This chain is Acyl-homoserine-lactone synthase (esaI), found in Pantoea stewartii subsp. stewartii (Erwinia stewartii).